A 1077-amino-acid polypeptide reads, in one-letter code: MTNFRLNVLAYSVMLGLTASVAYAEPTNQPTNQPTNQPTNQPTNQPTNQPTNQPTNQPTNQPTNQPTNQNSNASEQLEQINVSGSTENTDTKAPPKIAETVKTAKKLEKEQAQDVKDLVRYETGITVVEAGRFGNSGFAVRGVEENRVAVQIDGLHQAETISSQGFKELFEGYGNFNNTRNSAEIETLKQVTIRKGADSLKSGSGALGGSVSLDTKDARDYLLNKNYYASYKRGYNTADNQNLNTLTLGGRYKYFDAIAVLTSRKGHELENFGYKNYNDKIQGKTREKADPYRRTQDSALLKIGFQPTENHRFSVVADLYKQTSKGHDFSYTLKPNTQYMTYDEKELRHTNDKVERKNIAFVYENFTETPFWDTLKITYSHQKITTSARTDDYCDGNDKCALAGNPLGMKYNQDNQLVGKDGKSAKYQDINKTQVIKERLPFTKPNGRWRFHKVDWDALKKKYPGVPIYASCLEEDNDPSEFCTYEVKTTKKENTFEINGKRYDLLSEADKNVISDEQRLPTNVSYLFSCDGLNCDKKTILGFKKRRNLLKIFLFEVIEKRCQKYGKTKVKANDQLSGPYLFMPNKKGYQANLWSQRDLTSETKQINLDLTKHLELGKTQHDLSYGGLWSEMEKSMTNLAGDTPLNVKWWAQYPHNCATFLPPSTMTPNAKPTLNPERTSTLCNNVNVFSFLIPVKTKTGALYFINDFRVNNYVAFNLGYRYDRVKYEPEYIPGKTPKIPDDMVTNLYIKTPEFDASKADSDPDELSKKEANAAANIKEIAQPKKFSASSYSFGTTLDPLNWLRLQAKYSKGFRAPTSDEIYFTFKHPDFSIQPNRDLQPETAKTKELSLTVHNDMGYITTSVFDTRYQNFIDLSYQGRRDVHGHSKLIPFHFYQNVNRPNAKVTGFEIASQISLGNITKLFNGFSLSYKYTYQKGRINGNIPMNAIQPRTAVYGVSYVHPDDKYGLDLYISHASAKNAEDTYNMFYKEEGKTDSTIKWRSKSYTTIDLLGYIKPIKNLTLRAGVYNLTNRKYITWDSARSIRPFGTSNMINQDTGLGINRFYAPERNYRMSVQFEF.

Residues 1–24 form the signal peptide; it reads MTNFRLNVLAYSVMLGLTASVAYA. The segment at 25–72 is disordered; that stretch reads EPTNQPTNQPTNQPTNQPTNQPTNQPTNQPTNQPTNQPTNQPTNQNSN. 11 consecutive repeat copies span residues 26 to 29, 30 to 33, 34 to 37, 38 to 41, 42 to 45, 46 to 49, 50 to 53, 54 to 57, 58 to 61, 62 to 65, and 66 to 69. An 11 X 4 AA tandem repeats of P-T-N-Q region spans residues 26 to 69; that stretch reads PTNQPTNQPTNQPTNQPTNQPTNQPTNQPTNQPTNQPTNQPTNQ. Positions 26–70 are enriched in low complexity; sequence PTNQPTNQPTNQPTNQPTNQPTNQPTNQPTNQPTNQPTNQPTNQN. A TonB box motif is present at residues 78 to 85; that stretch reads EQINVSGS. Residues 89 to 216 form the TBDR plug domain; that stretch reads TDTKAPPKIA…LGGSVSLDTK (128 aa). One can recognise a TBDR beta-barrel domain in the interval 224-1077; it reads NKNYYASYKR…NYRMSVQFEF (854 aa). The TonB C-terminal box signature appears at 1060–1077; the sequence is NRFYAPERNYRMSVQFEF.

This sequence belongs to the TonB-dependent receptor family. Hemoglobin/haptoglobin binding protein subfamily.

The protein resides in the cell outer membrane. Acts as a receptor for hemoglobin or the hemoglobin/haptoglobin complex of the human host and is required for heme uptake. This Haemophilus influenzae protein is Hemoglobin and hemoglobin-haptoglobin-binding protein A (hgpA).